We begin with the raw amino-acid sequence, 488 residues long: MCLKMRYERIKYILLFSLMHLVYSNSTFESFTENPHISSQISNVLYMDQMFIIYILICILLILISVIVYLSKRYSQQMMQSSDNITNRRSNPEVRNKSNIYDLPPLLDVTSVNEETPIVKRPINERIENLEFDPRFEIDQAKLEISEDKLGSGFFGEVCYGLLSMRTSNTETDTLQKLSVAVKQSNDPTQENQEKMIEDETKLMCAIGRNPNILAIIGAVTANSGSARNLLIVEFVECGDLLKFLEEKKSIFKDELVYEKNGYLLPKSIRRKTYMFNENEDDVIEESLDSLCTSDLLSFSYQIAEGMEYLASIPCVHRDLALRNVLLNKNKTIRIADFGLARKYQVDGYYRITKGVGTPMPARWMAPEVMREGKCTEKSDVWSYGVSLYEMFSLGELPYSNVSNSDVFEHVVQGNQLPMPQYCHPKMYDRMKQFWNFDATFRPSFSKCVEFFEEHLSVSATNLLEQIQKTLKSEAERQSKLEDWIRRD.

The first 26 residues, 1–26, serve as a signal peptide directing secretion; that stretch reads MCLKMRYERIKYILLFSLMHLVYSNS. The N-linked (GlcNAc...) asparagine glycan is linked to Asn25. The Extracellular segment spans residues 27-50; it reads TFESFTENPHISSQISNVLYMDQM. Residues 51-70 form a helical membrane-spanning segment; that stretch reads FIIYILICILLILISVIVYL. The Cytoplasmic segment spans residues 71–488; it reads SKRYSQQMMQ…SKLEDWIRRD (418 aa). Residues 144-458 enclose the Protein kinase domain; sequence EISEDKLGSG…VEFFEEHLSV (315 aa). ATP is bound by residues 150–158 and Lys183; that span reads LGSGFFGEV. Catalysis depends on Asp319, which acts as the Proton acceptor.

The protein belongs to the protein kinase superfamily. Tyr protein kinase family. In terms of tissue distribution, hypodermal cells.

The protein localises to the cell membrane. It catalyses the reaction L-tyrosyl-[protein] + ATP = O-phospho-L-tyrosyl-[protein] + ADP + H(+). Functionally, may be specifically involved in cell-cell interactions regulating cell fusions that generate the hypodermis during postembryonic development. It has a role in the development of the HYP7 hypodermal syncytium. The protein is Receptor-like tyrosine-protein kinase kin-15 (kin-15) of Caenorhabditis elegans.